The following is a 24-amino-acid chain: Brevinin-1SPa (24 aa).

Cys18 and Cys24 are disulfide-bonded.

Expressed by the skin glands.

The protein localises to the secreted. Antimicrobial peptide with activity against Gram-negative and Gram-positive bacteria (MIC=13 uM against E.coli, MIC=3 uM against S.aureus) and fungi (MIC=6 uM against C.albicans). Shows hemolytic activity on human erythrocytes (HC(50)=7 uM). The polypeptide is Brevinin-1SPa (Lithobates septentrionalis (Mink frog)).